The following is a 975-amino-acid chain: Nesprin-3 (975 aa).

Residues 1–925 (MTQQPQDDFD…LGSLFRRACC (925 aa)) are Cytoplasmic-facing. A Spectrin 1 repeat occupies 220-325 (REHEEYQAGV…WEEEEERLRG (106 aa)). The stretch at 617-645 (NHQHKMDQLSSDFQALQRSLEDLVDRCRQ) forms a coiled coil. One copy of the Spectrin 2 repeat lies at 647–740 (VQEHCTFSHQ…RELAESWRAL (94 aa)). Positions 917-975 (GSLFRRACCVALPLQLLLLLFLLLLFLLPIREEDRSCTLANNFARSFTLMLRYNGPPPT) constitute a KASH domain. Residues 926–946 (VALPLQLLLLLFLLLLFLLPI) form a helical; Anchor for type IV membrane protein membrane-spanning segment. At 947–975 (REEDRSCTLANNFARSFTLMLRYNGPPPT) the chain is on the perinuclear space side.

It belongs to the nesprin family. In terms of assembly, core component of LINC complexes which are composed of inner nuclear membrane SUN domain-containing proteins coupled to outer nuclear membrane KASH domain-containing nesprins. SUN and KASH domain-containing proteins seem to bind each other promiscuously; however, differentially expression of LINC complex constituents can give rise to specific assemblies. Interacts with SUN1 and SUN2; probably forming respective LINC complexes. Interacts with PLEC (via actin-binding domain). Interacts with DST. Interacts with SYNE1 via spectrin repeats. Interacts (via KASH domain) with TOR1A (ATP-bound); the interaction is required for SYNE3 nuclear envelope localization. The disulfid bond with SUN1 or SUN2 is required for stability of the respective LINC complex under tensile forces. In terms of tissue distribution, expressed in aortic endothelial cells (at protein level).

It localises to the nucleus outer membrane. Its subcellular location is the nucleus envelope. The protein resides in the rough endoplasmic reticulum. Functionally, as a component of the LINC (LInker of Nucleoskeleton and Cytoskeleton) complex involved in the connection between the nuclear lamina and the cytoskeleton. The nucleocytoplasmic interactions established by the LINC complex play an important role in the transmission of mechanical forces across the nuclear envelope and in nuclear movement and positioning. Probable anchoring protein which tethers the nucleus to the cytoskeleton by binding PLEC which can associate with the intermediate filament system. Plays a role in the regulation of aortic epithelial cell morphology, and is required for flow-induced centrosome polarization and directional migration in aortic endothelial cells. The protein is Nesprin-3 of Homo sapiens (Human).